Consider the following 399-residue polypeptide: MARRLQDELSAFFFEYDTPRMVLVRNKKVGVIFRLIQLVVLVYVIGWVFVYEKGYQTSSDLISSVSVKLKGLAVTQLQGLGPQVWDVADYVFPAHGDSSFVVMTNFIVTPQQTQGHCAENPEGGICQDDSGCTPGKAERKAQGIRTGNCVPFNGTVKTCEIFGWCPVEVDDKIPSPALLREAENFTLFIKNSISFPRFKVNRRNLVEEVNGTYMKKCLYHKIQHPLCPVFNLGYVVRESGQDFRSLAEKGGVVGITIDWKCDLDWHVRHCKPIYQFHGLYGEKNLSPGFNFRFARHFVQNGTNRRHLFKVFGIHFDILVDGKAGKFDIIPTMTTIGSGIGIFGVATVLCDLLLLHILPKRHYYKQKKFKYAEDMGPGEGEHDPVATSSTLGLQENMRTS.

Topologically, residues 1–28 are cytoplasmic; the sequence is MARRLQDELSAFFFEYDTPRMVLVRNKK. A helical membrane pass occupies residues 29–50; the sequence is VGVIFRLIQLVVLVYVIGWVFV. The Extracellular segment spans residues 51–338; sequence YEKGYQTSSD…IPTMTTIGSG (288 aa). Positions 68, 70, and 140 each coordinate CTP. Lys-70 is an ATP binding site. 3 disulfides stabilise this stretch: Cys-117–Cys-165, Cys-126–Cys-149, and Cys-132–Cys-159. 2 N-linked (GlcNAc...) asparagine glycosylation sites follow: Asn-153 and Asn-184. Thr-186 is a binding site for CTP. ATP is bound at residue Thr-186. N-linked (GlcNAc...) asparagine glycosylation is present at Asn-210. 2 disulfides stabilise this stretch: Cys-217–Cys-227 and Cys-261–Cys-270. The ATP site is built by Ser-286, Asn-290, and Arg-292. Residues Asn-290 and Arg-292 each contribute to the CTP site. A glycan (N-linked (GlcNAc...) asparagine) is linked at Asn-300. Lys-309 provides a ligand contact to CTP. Lys-309 is a binding site for ATP. The interval 331-338 is pore-forming motif; sequence TMTTIGSG. Residues 339-358 traverse the membrane as a helical segment; it reads IGIFGVATVLCDLLLLHILP. Topologically, residues 359–399 are cytoplasmic; sequence KRHYYKQKKFKYAEDMGPGEGEHDPVATSSTLGLQENMRTS. Positions 374–399 are disordered; the sequence is MGPGEGEHDPVATSSTLGLQENMRTS. The segment covering 385-399 has biased composition (polar residues); it reads ATSSTLGLQENMRTS. Phosphoserine occurs at positions 387 and 388. Thr-389 carries the post-translational modification Phosphothreonine.

It belongs to the P2X receptor family. As to quaternary structure, functional P2XRs are organized as homomeric and heteromeric trimers. Homotrimer. Forms heterodimer with P2RX2. Forms heterodimer with P2RX4. Forms heterodimer with P2RX5. As to expression, high levels in vas deferens and urinary bladder. Lower extent in spinal cord, coeliac ganglion, lung and spleen (probably in the smooth muscle part of both organs).

It localises to the cell membrane. The enzyme catalyses Ca(2+)(in) = Ca(2+)(out). It carries out the reaction K(+)(in) = K(+)(out). The catalysed reaction is Na(+)(in) = Na(+)(out). Its activity is regulated as follows. Activated by low concentrations of ATP (&lt;1 uM). Undergoes rapid desensitisation. Sensitives to the ATP agonist:alpha/beta-methylene-ATP. Modulated by cholesterol. Its function is as follows. ATP-gated nonselective transmembrane cation channel permeable to potassium, sodium and with relatively high calcium permeability. Furthermore, CTP functions as a weak affinity agonist for P2RX1. Plays a role a role in urogenital, immune and cardiovascular function. Specifically, plays an important role in neurogenic contraction of smooth muscle of the vas deferens, and therefore is essential for normal male reproductive function. In addition, contributes to smooth muscle contractions of the urinary bladder. On platelets, contributes to platelet activation and aggregation and thereby, also to thrombosis. On neutrophils, it is involved in chemotaxis and in mitigating the activation of circulating cells. The protein is P2X purinoceptor 1 (P2rx1) of Rattus norvegicus (Rat).